Reading from the N-terminus, the 1255-residue chain is Period circadian protein homolog 2 (1255 aa).

The interval 1 to 79 is disordered; it reads MNGYAEFPPS…EPPDARQSPD (79 aa). The segment covering 35–56 has biased composition (polar residues); it reads SSGSSGHETNENCSTGRDSQGS. The Nuclear export signal 1 signature appears at 111–120; sequence LIKTLKELKV. The PAS 1 domain maps to 181 to 248; that stretch reads VTSEHIVKNA…FHSFTSPYKL (68 aa). The LXXLL motif lies at 308–312; sequence LCCLL. Residues 321–387 form the PAS 2 domain; the sequence is YEAPRIPPEK…MLAIHKKILQ (67 aa). Positions 395–438 constitute a PAC domain; that stretch reads YSPIRFRARNGEYITLDTSWSSFINPWSRKISFIIGRHKVRVGP. Positions 462–471 match the Nuclear export signal 2 motif; sequence LTEQIHRLLL. 2 disordered regions span residues 473 to 557 and 617 to 646; these read PVPH…AVPA and RSSDKRKATVSPGPHAGEAEPPSRVNSRTG. Positions 480–484 are important for protein stability; it reads SGYGS. The span at 504 to 516 shows a compositional bias: basic and acidic residues; it reads NGHEDSRRRRAEI. The interval 512–717 is CSNK1E binding domain; it reads RRAEICKNGN…ALACGLSQEK (206 aa). S527, S530, S533, and S540 each carry phosphoserine. Over residues 529–541 the composition is skewed to basic and acidic residues; sequence YSHESGEQKKKSV. A phosphoserine mark is found at S662, S696, S700, S714, S766, and S771. Disordered stretches follow at residues 764–838 and 931–985; these read ERSK…DTSQ and FPSH…QSRS. The Nuclear localization signal motif lies at 789–805; the sequence is KKTGKNRKLKSKRVKPR. Residues 790–803 are compositionally biased toward basic residues; sequence KTGKNRKLKSKRVK. 2 stretches are compositionally biased toward polar residues: residues 829 to 838 and 936 to 956; these read TAWSPSDTSQ and TLTSEMASASQPEFPSRTSIP. Residues 888–1071 form an interaction with PPARG region; the sequence is QFAVQPPPFP…NEDLCSASGS (184 aa). S945 carries the post-translational modification Phosphoserine. The span at 959–972 shows a compositional bias: low complexity; sequence PCACPATRATPPSA. Residue S977 is modified to Phosphoserine. Residues 989-996 carry the Nuclear export signal 3 motif; sequence LQLNLLQL. Residues 1018-1050 form a disordered region; it reads VGADCKPGTSRDQQPKAPLTRDEPSDTQNSDAL. Residues 1057–1061 carry the LXXLL motif; that stretch reads LNLLL. The interval 1077–1106 is disordered; that stretch reads LGSGSLGCDASPSGAGSSDTSHTSKYFGSI. Positions 1090–1106 are enriched in polar residues; that stretch reads GAGSSDTSHTSKYFGSI. S1124 carries the post-translational modification Phosphoserine. Residues 1155-1255 form a CRY binding domain region; the sequence is SRNLEAVLKE…PLNHRIEEQT (101 aa). The disordered stretch occupies residues 1231–1255; it reads GLSEVSDTKEDENGSPLNHRIEEQT.

In terms of assembly, homodimer. Component of the circadian core oscillator, which includes the CRY proteins, CLOCK or NPAS2, BMAL1 or BMAL2, CSNK1D and/or CSNK1E, TIMELESS, and the PER proteins. Interacts with CLOCK-BMAL1 (off DNA). Interacts with BMAL2. Interacts directly with PER1 and PER3, and through a C-terminal domain, with CRY1 and CRY2. Interacts (via PAS 2 domain) with TIMELESS. Interacts with NFIL3. Different large complexes have been identified with different repressive functions. The core of PER complexes is composed of at least PER1, PER2, PER3, CRY1, CRY2, CSNK1D and/or CSNK1E. The large PER complex involved in the repression of transcriptional termination is composed of at least PER2, CDK9, DDX5, DHX9, NCBP1 and POLR2A (active). The large PER complex involved in the histone deacetylation is composed of at least HDAC1, PER2, SFPQ and SIN3A. The large PER complex involved in the histone methylation is composed of at least PER2, CBX3, TRIM28, SUV39H1 and/or SUV39H2; CBX3 mediates the formation of the complex. Interacts with SETX; the interaction inhibits termination of circadian target genes. Interacts with the nuclear receptors HNF4A, NR1D1, NR4A2, RORA, PPARA, PPARG and THRA; the interaction with at least PPARG is ligand dependent. Interacts with PML. Interacts (phosphorylated) with BTRC and FBXW11; the interactions trigger proteasomal degradation. Interacts with NONO and SFPQ. Interacts with CAVIN3. Interacts with MAGEL2. Interacts with MAP1LC3B. Interacts with HNF4A. Acetylated. Deacetylated by SIRT1, resulting in decreased protein stability. Deacetylated by SIRT6, preventing its degradation by the proteasome, resulting in increased protein stability. In terms of processing, phosphorylated by CSNK1E and CSNK1D. Phosphorylation results in PER2 protein degradation. May be dephosphorylated by PP1. Post-translationally, ubiquitinated, leading to its proteasomal degradation. Ubiquitination may be inhibited by CRY1. In terms of tissue distribution, widely expressed. Found in heart, brain, placenta, lung, liver, skeleatal muscle, kidney and pancreas. High levels in skeletal muscle and pancreas. Low levels in lung. Isoform 2 is expressed in keratinocytes (at protein level).

The protein localises to the nucleus. Its subcellular location is the cytoplasm. It is found in the perinuclear region. It localises to the nucleolus. In terms of biological role, transcriptional repressor which forms a core component of the circadian clock. The circadian clock, an internal time-keeping system, regulates various physiological processes through the generation of approximately 24 hour circadian rhythms in gene expression, which are translated into rhythms in metabolism and behavior. It is derived from the Latin roots 'circa' (about) and 'diem' (day) and acts as an important regulator of a wide array of physiological functions including metabolism, sleep, body temperature, blood pressure, endocrine, immune, cardiovascular, and renal function. Consists of two major components: the central clock, residing in the suprachiasmatic nucleus (SCN) of the brain, and the peripheral clocks that are present in nearly every tissue and organ system. Both the central and peripheral clocks can be reset by environmental cues, also known as Zeitgebers (German for 'timegivers'). The predominant Zeitgeber for the central clock is light, which is sensed by retina and signals directly to the SCN. The central clock entrains the peripheral clocks through neuronal and hormonal signals, body temperature and feeding-related cues, aligning all clocks with the external light/dark cycle. Circadian rhythms allow an organism to achieve temporal homeostasis with its environment at the molecular level by regulating gene expression to create a peak of protein expression once every 24 hours to control when a particular physiological process is most active with respect to the solar day. Transcription and translation of core clock components (CLOCK, NPAS2, BMAL1, BMAL2, PER1, PER2, PER3, CRY1 and CRY2) plays a critical role in rhythm generation, whereas delays imposed by post-translational modifications (PTMs) are important for determining the period (tau) of the rhythms (tau refers to the period of a rhythm and is the length, in time, of one complete cycle). A diurnal rhythm is synchronized with the day/night cycle, while the ultradian and infradian rhythms have a period shorter and longer than 24 hours, respectively. Disruptions in the circadian rhythms contribute to the pathology of cardiovascular diseases, cancer, metabolic syndrome and aging. A transcription/translation feedback loop (TTFL) forms the core of the molecular circadian clock mechanism. Transcription factors, CLOCK or NPAS2 and BMAL1 or BMAL2, form the positive limb of the feedback loop, act in the form of a heterodimer and activate the transcription of core clock genes and clock-controlled genes (involved in key metabolic processes), harboring E-box elements (5'-CACGTG-3') within their promoters. The core clock genes: PER1/2/3 and CRY1/2 which are transcriptional repressors form the negative limb of the feedback loop and interact with the CLOCK|NPAS2-BMAL1|BMAL2 heterodimer inhibiting its activity and thereby negatively regulating their own expression. This heterodimer also activates nuclear receptors NR1D1/2 and RORA/B/G, which form a second feedback loop and which activate and repress BMAL1 transcription, respectively. PER1 and PER2 proteins transport CRY1 and CRY2 into the nucleus with appropriate circadian timing, but also contribute directly to repression of clock-controlled target genes through interaction with several classes of RNA-binding proteins, helicases and others transcriptional repressors. PER appears to regulate circadian control of transcription by at least three different modes. First, interacts directly with the CLOCK-BMAL1 at the tail end of the nascent transcript peak to recruit complexes containing the SIN3-HDAC that remodel chromatin to repress transcription. Second, brings H3K9 methyltransferases such as SUV39H1 and SUV39H2 to the E-box elements of the circadian target genes, like PER2 itself or PER1. The recruitment of each repressive modifier to the DNA seems to be very precisely temporally orchestrated by the large PER complex, the deacetylases acting before than the methyltransferases. Additionally, large PER complexes are also recruited to the target genes 3' termination site through interactions with RNA-binding proteins and helicases that may play a role in transcription termination to regulate transcription independently of CLOCK-BMAL1 interactions. Recruitment of large PER complexes to the elongating polymerase at PER and CRY termination sites inhibited SETX action, impeding RNA polymerase II release and thereby repressing transcriptional reinitiation. May propagate clock information to metabolic pathways via the interaction with nuclear receptors. Coactivator of PPARA and corepressor of NR1D1, binds rhythmically at the promoter of nuclear receptors target genes like BMAL1 or G6PC1. Directly and specifically represses PPARG proadipogenic activity by blocking PPARG recruitment to target promoters and thereby inhibiting transcriptional activation. Required for fatty acid and lipid metabolism, is involved as well in the regulation of circulating insulin levels. Plays an important role in the maintenance of cardiovascular functions through the regulation of NO and vasodilatatory prostaglandins production in aortas. Controls circadian glutamate uptake in synaptic vesicles through the regulation of VGLUT1 expression. May also be involved in the regulation of inflammatory processes. Represses the CLOCK-BMAL1 induced transcription of BHLHE40/DEC1 and ATF4. Negatively regulates the formation of the TIMELESS-CRY1 complex by competing with TIMELESS for binding to CRY1. This chain is Period circadian protein homolog 2 (PER2), found in Homo sapiens (Human).